The following is a 508-amino-acid chain: Photosystem II CP47 reaction center protein (508 aa).

Helical transmembrane passes span 21–36, 101–115, 140–156, 203–218, 237–252, and 457–472; these read AVHL…WAGS, IVLS…VWHW, GIHL…FGAF, IAAG…FHLT, VLSS…AFVV, and SFAL…HGSR.

The protein belongs to the PsbB/PsbC family. PsbB subfamily. In terms of assembly, PSII is composed of 1 copy each of membrane proteins PsbA, PsbB, PsbC, PsbD, PsbE, PsbF, PsbH, PsbI, PsbJ, PsbK, PsbL, PsbM, PsbT, PsbX, PsbY, PsbZ, Psb30/Ycf12, peripheral proteins PsbO, CyanoQ (PsbQ), PsbU, PsbV and a large number of cofactors. It forms dimeric complexes. Binds multiple chlorophylls. PSII binds additional chlorophylls, carotenoids and specific lipids. serves as cofactor.

Its subcellular location is the cellular thylakoid membrane. Functionally, one of the components of the core complex of photosystem II (PSII). It binds chlorophyll and helps catalyze the primary light-induced photochemical processes of PSII. PSII is a light-driven water:plastoquinone oxidoreductase, using light energy to abstract electrons from H(2)O, generating O(2) and a proton gradient subsequently used for ATP formation. The protein is Photosystem II CP47 reaction center protein of Synechococcus elongatus (strain ATCC 33912 / PCC 7942 / FACHB-805) (Anacystis nidulans R2).